A 122-amino-acid polypeptide reads, in one-letter code: Large ribosomal subunit protein uL14 (122 aa).

The protein belongs to the universal ribosomal protein uL14 family. In terms of assembly, part of the 50S ribosomal subunit. Forms a cluster with proteins L3 and L19. In the 70S ribosome, L14 and L19 interact and together make contacts with the 16S rRNA in bridges B5 and B8.

Binds to 23S rRNA. Forms part of two intersubunit bridges in the 70S ribosome. In Pseudomonas paraeruginosa (strain DSM 24068 / PA7) (Pseudomonas aeruginosa (strain PA7)), this protein is Large ribosomal subunit protein uL14.